The primary structure comprises 352 residues: Chorismate synthase (352 aa).

Arg-48 contributes to the NADP(+) binding site. FMN-binding positions include 125–127 (RSS), 238–239 (NA), Gly-278, 293–297 (KPTSS), and Arg-319.

It belongs to the chorismate synthase family. In terms of assembly, homotetramer. FMNH2 serves as cofactor.

The catalysed reaction is 5-O-(1-carboxyvinyl)-3-phosphoshikimate = chorismate + phosphate. Its pathway is metabolic intermediate biosynthesis; chorismate biosynthesis; chorismate from D-erythrose 4-phosphate and phosphoenolpyruvate: step 7/7. In terms of biological role, catalyzes the anti-1,4-elimination of the C-3 phosphate and the C-6 proR hydrogen from 5-enolpyruvylshikimate-3-phosphate (EPSP) to yield chorismate, which is the branch point compound that serves as the starting substrate for the three terminal pathways of aromatic amino acid biosynthesis. This reaction introduces a second double bond into the aromatic ring system. This chain is Chorismate synthase, found in Legionella pneumophila subsp. pneumophila (strain Philadelphia 1 / ATCC 33152 / DSM 7513).